We begin with the raw amino-acid sequence, 476 residues long: Aspartyl/glutamyl-tRNA(Asn/Gln) amidotransferase subunit B (476 aa).

This sequence belongs to the GatB/GatE family. GatB subfamily. Heterotrimer of A, B and C subunits.

It carries out the reaction L-glutamyl-tRNA(Gln) + L-glutamine + ATP + H2O = L-glutaminyl-tRNA(Gln) + L-glutamate + ADP + phosphate + H(+). The catalysed reaction is L-aspartyl-tRNA(Asn) + L-glutamine + ATP + H2O = L-asparaginyl-tRNA(Asn) + L-glutamate + ADP + phosphate + 2 H(+). Functionally, allows the formation of correctly charged Asn-tRNA(Asn) or Gln-tRNA(Gln) through the transamidation of misacylated Asp-tRNA(Asn) or Glu-tRNA(Gln) in organisms which lack either or both of asparaginyl-tRNA or glutaminyl-tRNA synthetases. The reaction takes place in the presence of glutamine and ATP through an activated phospho-Asp-tRNA(Asn) or phospho-Glu-tRNA(Gln). This chain is Aspartyl/glutamyl-tRNA(Asn/Gln) amidotransferase subunit B, found in Lactobacillus johnsonii (strain CNCM I-12250 / La1 / NCC 533).